The sequence spans 109 residues: Ig kappa chain V region K16-167 (109 aa).

The interval 1–23 (ALVMTQTPSPVSAAVGGTVTISC) is framework-1. Positions 24-35 (QASQSVYSNNLS) are complementarity-determining-1. The tract at residues 36–50 (WFQQKPGQPPKLLIY) is framework-2. Residues 51–57 (KASTLAS) are complementarity-determining-2. Residues 58 to 89 (GVPSRFKGSGSGTQFTLPISGVECDDAATYYC) are framework-3. The interval 90–99 (QGTNTGNNIV) is complementarity-determining-3. Residues 100-109 (FGTGTEVVVK) form a framework-4 region.

This chain is Ig kappa chain V region K16-167, found in Oryctolagus cuniculus (Rabbit).